Reading from the N-terminus, the 247-residue chain is NH(3)-dependent NAD(+) synthetase (247 aa).

29–36 lines the ATP pocket; the sequence is GLSGGVDS. Mg(2+) is bound at residue aspartate 35. Deamido-NAD(+) is bound at residue arginine 112. Threonine 132 is a binding site for ATP. Position 137 (glutamate 137) interacts with Mg(2+). The deamido-NAD(+) site is built by lysine 145 and aspartate 152. Positions 161 and 183 each coordinate ATP. 233-234 is a deamido-NAD(+) binding site; it reads HK.

It belongs to the NAD synthetase family. In terms of assembly, homodimer.

It carries out the reaction deamido-NAD(+) + NH4(+) + ATP = AMP + diphosphate + NAD(+) + H(+). The protein operates within cofactor biosynthesis; NAD(+) biosynthesis; NAD(+) from deamido-NAD(+) (ammonia route): step 1/1. Catalyzes the ATP-dependent amidation of deamido-NAD to form NAD. Uses ammonia as a nitrogen source. The sequence is that of NH(3)-dependent NAD(+) synthetase from Archaeoglobus fulgidus (strain ATCC 49558 / DSM 4304 / JCM 9628 / NBRC 100126 / VC-16).